Reading from the N-terminus, the 791-residue chain is ATP-dependent 6-phosphofructokinase, platelet type (791 aa).

Residue methionine 1 is modified to N-acetylmethionine. Positions 1–399 are N-terminal catalytic PFK domain 1; sequence MDNKVSASPR…NLNTYKRLAI (399 aa). Phosphoserine is present on serine 6. Serine 12 is subject to Phosphoserine; by PKA. At serine 21 the chain carries Phosphoserine. ATP contacts are provided by residues glycine 34, 97–98, and 127–130; these read RS and GSGS. A Phosphoserine modification is found at serine 142. Residues 173–175, arginine 210, 217–219, glutamate 273, arginine 301, and 307–310 contribute to the substrate site; these read SID, MGR, and HVQR. Catalysis depends on aspartate 175, which acts as the Proton acceptor. The residue at position 386 (serine 386) is a Phosphoserine. Residue lysine 395 is modified to N6-acetyllysine. Positions 400–411 are interdomain linker; sequence KLPDDKIQKSNC. The interval 412 to 791 is C-terminal regulatory PFK domain 2; sequence NVAVINVGAP…RGGPEEPAAI (380 aa). Arginine 481 lines the beta-D-fructose 2,6-bisphosphate pocket. The residue at position 486 (lysine 486) is an N6-acetyllysine. Residues 538 to 542, arginine 576, 583 to 585, and glutamate 639 contribute to the beta-D-fructose 2,6-bisphosphate site; these read TVSNN and MGG. Serine 540 is a glycosylation site (O-linked (GlcNAc) serine). The residue at position 651 (tyrosine 651) is a Phosphotyrosine. Residues arginine 665 and 671–674 each bind beta-D-fructose 2,6-bisphosphate; that span reads HMQQ. N6-acetyllysine is present on lysine 688. Beta-D-fructose 2,6-bisphosphate is bound at residue arginine 744.

This sequence belongs to the phosphofructokinase type A (PFKA) family. ATP-dependent PFK group I subfamily. Eukaryotic two domain clade 'E' sub-subfamily. In terms of assembly, homo- and heterotetramers. Phosphofructokinase (PFK) enzyme functions as a tetramer composed of different combinations of 3 types of subunits, called PFKM (M), PFKL (L) and PFKP (P). The composition of the PFK tetramer differs according to the tissue type it is present in. The kinetic and regulatory properties of the tetrameric enzyme are dependent on the subunit composition, hence can vary across tissues. Interacts with ATG4B; promoting phosphorylation of ATG4B. Requires Mg(2+) as cofactor. In terms of processing, glcNAcylation decreases enzyme activity. Phosphorylation at Ser-386 promotes interaction with ATG4B.

The protein localises to the cytoplasm. The catalysed reaction is beta-D-fructose 6-phosphate + ATP = beta-D-fructose 1,6-bisphosphate + ADP + H(+). Its pathway is carbohydrate degradation; glycolysis; D-glyceraldehyde 3-phosphate and glycerone phosphate from D-glucose: step 3/4. Its activity is regulated as follows. Allosterically activated by ADP, AMP, or fructose 2,6-bisphosphate, and allosterically inhibited by ATP or citrate. In terms of biological role, catalyzes the phosphorylation of D-fructose 6-phosphate to fructose 1,6-bisphosphate by ATP, the first committing step of glycolysis. This Oryctolagus cuniculus (Rabbit) protein is ATP-dependent 6-phosphofructokinase, platelet type (PFKP).